We begin with the raw amino-acid sequence, 347 residues long: UDP-galactose/UDP-glucose transporter 5 (347 aa).

8 consecutive transmembrane segments (helical) span residues 17-37 (LWKA…YGLL), 57-77 (LFLV…ALLA), 116-136 (VQTL…TLIM), 143-163 (FDYL…LFPA), 177-197 (TVWG…TSTF), 218-238 (ICSS…LPAV), 247-267 (CLFD…FISY), and 293-313 (CIWF…IVFG). The segment at 325-347 (SEKPPAAQELPRDEEAQPLKGNP) is disordered.

It belongs to the nucleotide-sugar transporter family. UDP-galactose:UMP antiporter (TC 2.A.7.11) subfamily.

The protein localises to the membrane. Sugar transporter involved in the transport of nucleotide-sugars from cytoplasm into the Golgi and/or the endoplasmic reticulum. This is UDP-galactose/UDP-glucose transporter 5 from Arabidopsis thaliana (Mouse-ear cress).